Consider the following 846-residue polypeptide: Protein kintoun (846 aa).

Disordered stretches follow at residues 1–21 (MSTA…ERAD), 377–412 (DSGV…PPDP), 581–657 (HTSI…DSTI), and 743–846 (HDSS…DDEI). Position 378 is a phosphoserine (Ser-378). Residues 399–408 (PETPELETAA) are compositionally biased toward low complexity. Basic residues-rich tracts occupy residues 596-612 (LHKK…KKQR) and 750-766 (QRKK…RAQQ). Ser-770 carries the phosphoserine modification. Basic and acidic residues predominate over residues 821–832 (TRQDHADADAKN).

Belongs to the PIH1 family. Kintoun subfamily. Interacts with Pp1alpha-96A, Pp1-87B, Pp1-13C and flw.

Its subcellular location is the cytoplasm. In terms of biological role, required for cytoplasmic pre-assembly of axonemal dyneins, thereby playing a central role in motility in cilia and flagella. Involved in pre-assembly of dynein arm complexes in the cytoplasm before intraflagellar transport loads them for the ciliary compartment. This chain is Protein kintoun, found in Drosophila pseudoobscura pseudoobscura (Fruit fly).